A 130-amino-acid polypeptide reads, in one-letter code: Phosphoribosyl-ATP pyrophosphatase (130 aa).

This sequence belongs to the PRA-PH family.

The protein resides in the cytoplasm. The catalysed reaction is 1-(5-phospho-beta-D-ribosyl)-ATP + H2O = 1-(5-phospho-beta-D-ribosyl)-5'-AMP + diphosphate + H(+). Its pathway is amino-acid biosynthesis; L-histidine biosynthesis; L-histidine from 5-phospho-alpha-D-ribose 1-diphosphate: step 2/9. The chain is Phosphoribosyl-ATP pyrophosphatase from Albidiferax ferrireducens (strain ATCC BAA-621 / DSM 15236 / T118) (Rhodoferax ferrireducens).